Here is a 630-residue protein sequence, read N- to C-terminus: Probable potassium transport system protein Kup 1 (630 aa).

The next 12 helical transmembrane spans lie at 15 to 35 (LLAM…TSPL), 58 to 78 (LISL…VLFL), 104 to 124 (TAIL…DAMI), 142 to 162 (PALS…LFAV), 173 to 193 (FFGP…FMHI), 208 to 228 (AVAF…AVFL), 252 to 272 (WFTV…AFVL), 290 to 310 (ALLP…QAVI), 342 to 362 (IYLP…VFIF), 368 to 388 (LATA…VLAF), 399 to 419 (AWWA…FLGA), and 424 to 444 (IHDG…IMWT).

The protein belongs to the HAK/KUP transporter (TC 2.A.72) family.

Its subcellular location is the cell inner membrane. It catalyses the reaction K(+)(in) + H(+)(in) = K(+)(out) + H(+)(out). Functionally, transport of potassium into the cell. Likely operates as a K(+):H(+) symporter. This is Probable potassium transport system protein Kup 1 from Sinorhizobium medicae (strain WSM419) (Ensifer medicae).